Consider the following 693-residue polypeptide: Elongation factor G (693 aa).

The 275-residue stretch at 8–282 (EKTRNIGIMA…AVIDYLPSPL (275 aa)) folds into the tr-type G domain. Residues 17–24 (AHVDAGKT), 81–85 (DTPGH), and 135–138 (NKMD) contribute to the GTP site.

This sequence belongs to the TRAFAC class translation factor GTPase superfamily. Classic translation factor GTPase family. EF-G/EF-2 subfamily.

The protein resides in the cytoplasm. Catalyzes the GTP-dependent ribosomal translocation step during translation elongation. During this step, the ribosome changes from the pre-translocational (PRE) to the post-translocational (POST) state as the newly formed A-site-bound peptidyl-tRNA and P-site-bound deacylated tRNA move to the P and E sites, respectively. Catalyzes the coordinated movement of the two tRNA molecules, the mRNA and conformational changes in the ribosome. The polypeptide is Elongation factor G (Streptococcus pneumoniae (strain CGSP14)).